The following is a 269-amino-acid chain: Indole-3-glycerol phosphate synthase (269 aa).

It belongs to the TrpC family.

The enzyme catalyses 1-(2-carboxyphenylamino)-1-deoxy-D-ribulose 5-phosphate + H(+) = (1S,2R)-1-C-(indol-3-yl)glycerol 3-phosphate + CO2 + H2O. The protein operates within amino-acid biosynthesis; L-tryptophan biosynthesis; L-tryptophan from chorismate: step 4/5. The protein is Indole-3-glycerol phosphate synthase of Rhodococcus opacus (strain B4).